The following is a 590-amino-acid chain: Muscarinic acetylcholine receptor M3 (590 aa).

At 1–67 the chain is on the extracellular side; the sequence is MTLHSNSTTS…DPLGGHTVWQ (67 aa). N-linked (GlcNAc...) asparagine glycosylation is found at Asn-6, Asn-15, Asn-41, and Asn-48. The helical transmembrane segment at 68 to 91 threads the bilayer; the sequence is VVFIAFLTGILALVTIIGNILVIV. Residues 92 to 104 lie on the Cytoplasmic side of the membrane; the sequence is SFKVNKQLKTVNN. A helical membrane pass occupies residues 105-130; that stretch reads YFLLSLACADLIIGVISMNLFTTYII. The Extracellular segment spans residues 131–142; that stretch reads MNRWALGNLACD. An intrachain disulfide couples Cys-141 to Cys-221. Residues 143 to 164 form a helical membrane-spanning segment; sequence LWLAIDYVASNASVMNLLVISF. Topologically, residues 165-184 are cytoplasmic; that stretch reads DRYFSITRPLTYRAKRTTKR. A helical transmembrane segment spans residues 185-206; that stretch reads AGVMIGLAWVISFVLWAPAILF. The Extracellular portion of the chain corresponds to 207–229; that stretch reads WQYFVGKRTVPPGECFIQFLSEP. The chain crosses the membrane as a helical span at residues 230-252; that stretch reads TITFGTAIAAFYMPVTIMTILYW. Topologically, residues 253 to 491 are cytoplasmic; sequence RIYKETEKRT…SLVKEKKAAQ (239 aa). The Basolateral sorting signal signature appears at 275 to 281; the sequence is AETENFV. A disordered region spans residues 323-357; sequence SSEQMDQDHSSSDSWNNNDAAASLENSASSDEEDI. The span at 334–345 shows a compositional bias: low complexity; sequence SDSWNNNDAAAS. Ser-385 bears the Phosphoserine mark. The helical transmembrane segment at 492 to 514 threads the bilayer; that stretch reads TLSAILLAFIITWTPYNIMVLVN. The Extracellular portion of the chain corresponds to 515 to 526; it reads TFCDSCIPKTFW. Cys-517 and Cys-520 are joined by a disulfide. A helical membrane pass occupies residues 527–546; that stretch reads NLGYWLCYINSTVNPVCYAL. Residues 547–590 lie on the Cytoplasmic side of the membrane; the sequence is CNKTFRTTFKMLLLCQCDKKKRRKQQYQQRQSVIFHKRAPEQAL.

This sequence belongs to the G-protein coupled receptor 1 family. Muscarinic acetylcholine receptor subfamily. CHRM3 sub-subfamily. In terms of assembly, homodimer; the dimers can form tetramers. Interacts with NALCN. Interacts with TMEM147.

The protein localises to the cell membrane. It is found in the postsynaptic cell membrane. The protein resides in the basolateral cell membrane. It localises to the endoplasmic reticulum membrane. Its function is as follows. The muscarinic acetylcholine receptor mediates various cellular responses, including inhibition of adenylate cyclase, breakdown of phosphoinositides and modulation of potassium channels through the action of G proteins. Primary transducing effect is Pi turnover. The polypeptide is Muscarinic acetylcholine receptor M3 (CHRM3) (Pongo pygmaeus (Bornean orangutan)).